Here is a 210-residue protein sequence, read N- to C-terminus: UMP-CMP kinase 3 (210 aa).

34 to 39 provides a ligand contact to ATP; that stretch reads GSGKGT. The tract at residues 54–83 is NMP; sequence SAGDLLRAEIKSGSENGTMIENMIKEGKIV. A ribonucleoside 5'-phosphate is bound by residues R60, 81-83, and 108-111; these read KIV and GFPR. N115 provides a ligand contact to CMP. The LID stretch occupies residues 146–154; that stretch reads GRNQGRVDD. Position 147 (R147) interacts with ATP. R151 and R162 together coordinate a ribonucleoside 5'-phosphate. Position 190 (K190) interacts with ATP.

It belongs to the adenylate kinase family. UMP-CMP kinase subfamily. As to quaternary structure, monomer. Mg(2+) is required as a cofactor.

It localises to the cytoplasm. The protein resides in the nucleus. It carries out the reaction UMP + ATP = UDP + ADP. It catalyses the reaction CMP + ATP = CDP + ADP. The catalysed reaction is dCMP + ATP = dCDP + ADP. Catalyzes the phosphorylation of pyrimidine nucleoside monophosphates at the expense of ATP. Plays an important role in de novo pyrimidine nucleotide biosynthesis. Has preference for UMP and CMP as phosphate acceptors. The polypeptide is UMP-CMP kinase 3 (URA6) (Oryza sativa subsp. japonica (Rice)).